We begin with the raw amino-acid sequence, 418 residues long: Protease LasA (418 aa).

Residues 1-31 (MQHKRSRAMASPRSPFLFVLLALAVGGTANA) form the signal peptide. Positions 32–236 (HDDGLPAFRY…ARQLQAKAAL (205 aa)) are excised as a propeptide. Zn(2+) is bound by residues H259 and D272. Residues C301 and C347 are joined by a disulfide bond. Catalysis depends on proton donor/acceptor residues H317 and H356. A Zn(2+)-binding site is contributed by H358. Residues C391 and C406 are joined by a disulfide bond.

This sequence belongs to the peptidase M23A family. Zn(2+) serves as cofactor. Processing of pro-LasA can occur extracellularly and requires elastase (lasB). Secretion and processing may be linked.

It localises to the secreted. Functionally, involved in proteolysis and elastolysis (degradation of the host protein elastin). Has staphylolytic activity (degrades pentaglycine cross-links in cell wall peptidoglycan), preferring Gly-Gly-|-X substrates where X is Ala or Gly. Enhances the elastolytic but not proteolytic activity of elastase (lasB) and elastolytic activity of other proteases. Degradation of host elastin is likely to contribute to the pathogenicity of P.aeruginosa. While either His-317 or His-356 can abstract a proton in the hydrolysis reaction, the same residue performs both functions in a given catalytic cycle, with the other stabilizing the catalytic intermediate. The polypeptide is Protease LasA (lasA) (Pseudomonas aeruginosa (strain ATCC 15692 / DSM 22644 / CIP 104116 / JCM 14847 / LMG 12228 / 1C / PRS 101 / PAO1)).